Reading from the N-terminus, the 1076-residue chain is Nickel-cobalt-cadmium resistance protein NccA (1076 aa).

Helical transmembrane passes span 14–34 (WLVLFLTAVVGAIGAWQLNLL), 367–387 (VAKNLVEGAALVVVILFALLG), 391–411 (AAVIAALVIPLSLLISAIGMN), 419–439 (LMSLGALDFGLIIDGAVIIVE), 476–496 (TVYGQLVIFMVFLPCLTFQGV), 503–523 (PMVITLMLALASAFVLSLTFV), 562–582 (MPFLGAALVTLALAAMAFTFV), 904–924 (LAIIVPLCFILIAATLYMAIG), 929–949 (TATVLTAVPLALAGGVFALVL), 960–980 (VGFIAVSGVAVLNGLVLISAI), 1004–1024 (PVLMTALVASLGFVPMAIATG), and 1036–1056 (VVIGGLITATVLTLFVLPAVC).

The protein belongs to the resistance-nodulation-cell division (RND) (TC 2.A.6) family.

It is found in the cell membrane. Component of the NCC cation-efflux system that confers resistance to nickel, cobalt and cadmium. May form a membrane tunnel, which allows ion transport across the membrane. The protein is Nickel-cobalt-cadmium resistance protein NccA (nccA) of Alcaligenes xylosoxydans xylosoxydans (Achromobacter xylosoxidans).